Consider the following 362-residue polypeptide: Red-sensitive opsin (362 aa).

At 1 to 49 (MAAWEAAFAARRRHEEEDTTRDSVFTYTNSNNTRGPFEGPNYHIAPRWV) the chain is on the extracellular side. Asparagine 31 carries N-linked (GlcNAc...) asparagine glycosylation. Residues 50 to 74 (YNLTSVWMIFVVAASVFTNGLVLVA) traverse the membrane as a helical segment. At 75 to 86 (TWKFKKLRHPLN) the chain is on the cytoplasmic side. A helical membrane pass occupies residues 87–112 (WILVNLAVADLGETVIASTISVINQI). The Extracellular portion of the chain corresponds to 113–126 (SGYFILGHPMCVVE). Cysteine 123 and cysteine 200 form a disulfide bridge. Residues 127–146 (GYTVSACGITALWSLAIISW) form a helical membrane-spanning segment. Topologically, residues 147-165 (ERWFVVCKPFGNIKFDGKL) are cytoplasmic. A helical transmembrane segment spans residues 166 to 189 (AVAGILFSWLWSCAWTAPPIFGWS). Over 190–215 (RYWPHGLKTSCGPDVFSGSSDPGVQS) the chain is Extracellular. The helical transmembrane segment at 216–243 (YMVVLMVTCCFFPLAIIILCYLQVWLAI) threads the bilayer. Residues 244 to 265 (RAVAAQQKESESTQKAEKEVSR) lie on the Cytoplasmic side of the membrane. The chain crosses the membrane as a helical span at residues 266-289 (MVVVMIVAYCFCWGPYTFFACFAA). At 290–297 (ANPGYAFH) the chain is on the extracellular side. The chain crosses the membrane as a helical span at residues 298 to 322 (PLAAALPAYFAKSATIYNPIIYVFM). An N6-(retinylidene)lysine modification is found at lysine 309. Topologically, residues 323–362 (NRQFRNCILQLFGKKVDDGSEVSTSRTEVSSVSNSSVSPA) are cytoplasmic.

It belongs to the G-protein coupled receptor 1 family. Opsin subfamily. Phosphorylated on some or all of the serine and threonine residues present in the C-terminal region. The color pigments are found in the cone photoreceptor cells.

The protein localises to the membrane. Its function is as follows. Visual pigments are the light-absorbing molecules that mediate vision. They consist of an apoprotein, opsin, covalently linked to cis-retinal. This is Red-sensitive opsin from Gallus gallus (Chicken).